The primary structure comprises 341 residues: Methionine import ATP-binding protein MetN (341 aa).

In terms of domain architecture, ABC transporter spans 9–247 (ISVQDVSKKL…SENSITNELF (239 aa)). Residue 41–48 (GHSGSGKT) participates in ATP binding.

It belongs to the ABC transporter superfamily. Methionine importer (TC 3.A.1.24) family. The complex is composed of two ATP-binding proteins (MetN), two transmembrane proteins (MetI) and a solute-binding protein (MetQ).

Its subcellular location is the cell inner membrane. The enzyme catalyses L-methionine(out) + ATP + H2O = L-methionine(in) + ADP + phosphate + H(+). The catalysed reaction is D-methionine(out) + ATP + H2O = D-methionine(in) + ADP + phosphate + H(+). Functionally, part of the ABC transporter complex MetNIQ involved in methionine import. Responsible for energy coupling to the transport system. The protein is Methionine import ATP-binding protein MetN of Chlamydia pneumoniae (Chlamydophila pneumoniae).